A 1271-amino-acid chain; its full sequence is ATP-dependent helicase/nuclease subunit A (1271 aa).

Residues threonine 3–arginine 476 form the UvrD-like helicase ATP-binding domain. ATP is bound at residue alanine 24–threonine 31. A UvrD-like helicase C-terminal domain is found at isoleucine 528–glycine 824.

This sequence belongs to the helicase family. AddA subfamily. As to quaternary structure, heterodimer of AddA and AddB/RexB. Mg(2+) serves as cofactor.

It carries out the reaction Couples ATP hydrolysis with the unwinding of duplex DNA by translocating in the 3'-5' direction.. The enzyme catalyses ATP + H2O = ADP + phosphate + H(+). In terms of biological role, the heterodimer acts as both an ATP-dependent DNA helicase and an ATP-dependent, dual-direction single-stranded exonuclease. Recognizes the chi site generating a DNA molecule suitable for the initiation of homologous recombination. The AddA nuclease domain is required for chi fragment generation; this subunit has the helicase and 3' -&gt; 5' nuclease activities. The sequence is that of ATP-dependent helicase/nuclease subunit A from Clostridium perfringens (strain ATCC 13124 / DSM 756 / JCM 1290 / NCIMB 6125 / NCTC 8237 / Type A).